The primary structure comprises 283 residues: Polyamine aminopropyltransferase (283 aa).

A PABS domain is found at 5–238 (QTWIDEYHKG…GIWSWTFASS (234 aa)). Glutamine 32 is a binding site for S-methyl-5'-thioadenosine. 2 residues coordinate spermidine: histidine 63 and aspartate 87. S-methyl-5'-thioadenosine-binding positions include glutamate 107 and 139–140 (DG). Aspartate 158 (proton acceptor) is an active-site residue. Residue 158–161 (DCSD) participates in spermidine binding.

It belongs to the spermidine/spermine synthase family. In terms of assembly, homodimer or homotetramer.

The protein localises to the cytoplasm. It carries out the reaction S-adenosyl 3-(methylsulfanyl)propylamine + putrescine = S-methyl-5'-thioadenosine + spermidine + H(+). It functions in the pathway amine and polyamine biosynthesis; spermidine biosynthesis; spermidine from putrescine: step 1/1. Its function is as follows. Catalyzes the irreversible transfer of a propylamine group from the amino donor S-adenosylmethioninamine (decarboxy-AdoMet) to putrescine (1,4-diaminobutane) to yield spermidine. The sequence is that of Polyamine aminopropyltransferase from Prochlorococcus marinus (strain MIT 9301).